Consider the following 122-residue polypeptide: Large ribosomal subunit protein uL14 (122 aa).

The protein belongs to the universal ribosomal protein uL14 family. Part of the 50S ribosomal subunit. Forms a cluster with proteins L3 and L19. In the 70S ribosome, L14 and L19 interact and together make contacts with the 16S rRNA in bridges B5 and B8.

Its function is as follows. Binds to 23S rRNA. Forms part of two intersubunit bridges in the 70S ribosome. This is Large ribosomal subunit protein uL14 from Shouchella clausii (strain KSM-K16) (Alkalihalobacillus clausii).